The following is a 606-amino-acid chain: Kelch-like protein 41 (606 aa).

At Ser3 the chain carries Phosphoserine. A BTB domain is found at 33–100 (IDCTLKAGDK…LYSASIDLND (68 aa)). One can recognise a BACK domain in the interval 135–237 (CLAILRLGLL…TEKYFKDHVE (103 aa)). 5 Kelch repeats span residues 346–398 (QIYV…EVDD), 399–447 (KIYV…SHKG), 448–495 (MIYC…VHKG), 497–542 (IVIA…SLAG), and 544–599 (LYAI…TRLN).

In terms of assembly, interacts with NRAP. Interacts with LASP1. Part of a complex that contains CUL3, RBX1 and KLHL41. In terms of processing, ubiquitinated by E3 ubiquitin ligase complex formed by CUL3 and RBX1 and probably targeted for proteasome-independent degradation. Quinone-induced oxidative stress increases its ubiquitination. As to expression, sarcomeric muscle.

The protein resides in the cytoplasm. It is found in the cytoskeleton. The protein localises to the cell projection. Its subcellular location is the pseudopodium. It localises to the ruffle. The protein resides in the myofibril. It is found in the sarcomere. The protein localises to the m line. Its subcellular location is the sarcoplasmic reticulum membrane. It localises to the endoplasmic reticulum membrane. In terms of biological role, involved in skeletal muscle development and differentiation. Regulates proliferation and differentiation of myoblasts and plays a role in myofibril assembly by promoting lateral fusion of adjacent thin fibrils into mature, wide myofibrils. Required for pseudopod elongation in transformed cells. This is Kelch-like protein 41 (KLHL41) from Homo sapiens (Human).